Consider the following 208-residue polypeptide: CASP-like protein 4A4 (208 aa).

Residues 1–53 lie on the Cytoplasmic side of the membrane; it reads MKELKDHVVVITYGPSSEASVTASPVSQQTPSLFAYSVTPSASRFSSRRASVH. Residues 54-74 form a helical membrane-spanning segment; sequence VIGLVLRFITMVLCFVSALSL. At 75-92 the chain is on the extracellular side; the sequence is AVNVQRPSKRHLTQNSSS. Asn-89 carries an N-linked (GlcNAc...) asparagine glycan. Residues 93 to 113 traverse the membrane as a helical segment; the sequence is FASYPELLYCFGVAVIGFVYT. At 114 to 141 the chain is on the cytoplasmic side; sequence SLQTFKGVCDITHRGVLISEPLSDYISF. Residues 142–162 form a helical membrane-spanning segment; the sequence is IFDQVICYLLVSSSSVAIAWI. Topologically, residues 163–176 are extracellular; sequence QHINEDAIKTLRNN. The N-linked (GlcNAc...) asparagine glycan is linked to Asn-175. Residues 177 to 197 traverse the membrane as a helical segment; it reads SIVSVSMSFSAFLVLTLSGLL. The Cytoplasmic segment spans residues 198 to 208; that stretch reads SGYKLCKRFMW.

It belongs to the Casparian strip membrane proteins (CASP) family. Homodimer and heterodimers.

The protein resides in the cell membrane. The chain is CASP-like protein 4A4 from Arabidopsis thaliana (Mouse-ear cress).